The chain runs to 715 residues: DNA ligase (715 aa).

Residues 47–51 (DADYD), 96–97 (SL), and Glu129 each bind NAD(+). Lys131 acts as the N6-AMP-lysine intermediate in catalysis. 4 residues coordinate NAD(+): Arg152, Glu189, Lys306, and Lys330. Zn(2+) contacts are provided by Cys435, Cys438, Cys453, and Cys459. The 79-residue stretch at 637–715 (KRDSAVAGKT…EDEWLALIQG (79 aa)) folds into the BRCT domain.

Belongs to the NAD-dependent DNA ligase family. LigA subfamily. The cofactor is Mg(2+). Mn(2+) is required as a cofactor.

It catalyses the reaction NAD(+) + (deoxyribonucleotide)n-3'-hydroxyl + 5'-phospho-(deoxyribonucleotide)m = (deoxyribonucleotide)n+m + AMP + beta-nicotinamide D-nucleotide.. Its function is as follows. DNA ligase that catalyzes the formation of phosphodiester linkages between 5'-phosphoryl and 3'-hydroxyl groups in double-stranded DNA using NAD as a coenzyme and as the energy source for the reaction. It is essential for DNA replication and repair of damaged DNA. In Rhodopseudomonas palustris (strain BisA53), this protein is DNA ligase.